The primary structure comprises 417 residues: COP9 signalosome complex subunit 7a (417 aa).

The 178-residue stretch at 2–179 (EQTKALNALE…EMVQINSVAA (178 aa)) folds into the PCI domain. Positions 240-417 (DEQKGAVPSS…KRGSKRKLTA (178 aa)) are disordered. The segment covering 263–290 (RGGGGGGDGAGAGGSFRGSGYSRGGGLS) has biased composition (gly residues). Low complexity-rich tracts occupy residues 291–311 (QGYR…SRQQ), 320–330 (SNQSGTNSLLT), and 343–352 (PSAVSPSAAA). The span at 367-379 (METGSGSGSGPLG) shows a compositional bias: gly residues. Acidic residues predominate over residues 385–405 (DMDDSEEDIDDDTMDLDDEGD).

The protein belongs to the CSN7/EIF3M family. CSN7 subfamily. Component of the COP9 signalosome (CSN) complex.

The protein localises to the cytoplasm. The protein resides in the nucleus. In terms of biological role, component of the COP9 signalosome (CSN) complex that acts as an regulator of the ubiquitin (Ubl) conjugation pathway by mediating the deneddylation of the cullin subunit of SCF-type E3 ubiquitin-protein ligase complexes. The CSN complex is involved in the regulation of the circadian clock through its control of the stability of the SCF(FWD1) complex. This is COP9 signalosome complex subunit 7a (csn-7a) from Neurospora crassa (strain ATCC 24698 / 74-OR23-1A / CBS 708.71 / DSM 1257 / FGSC 987).